A 231-amino-acid chain; its full sequence is NADH-ubiquinone oxidoreductase chain 4 (231 aa).

6 helical membrane passes run 1 to 21, 34 to 54, 63 to 85, 89 to 111, 128 to 148, and 169 to 189; these read PIAG…YGII, MFLP…LTCL, IAYS…TPWG, ALAL…NTTY, ILPM…AIPP, and TIIM…HMFL.

It belongs to the complex I subunit 4 family.

The protein localises to the mitochondrion membrane. The enzyme catalyses a ubiquinone + NADH + 5 H(+)(in) = a ubiquinol + NAD(+) + 4 H(+)(out). Functionally, core subunit of the mitochondrial membrane respiratory chain NADH dehydrogenase (Complex I) that is believed to belong to the minimal assembly required for catalysis. Complex I functions in the transfer of electrons from NADH to the respiratory chain. The immediate electron acceptor for the enzyme is believed to be ubiquinone. This is NADH-ubiquinone oxidoreductase chain 4 (MT-ND4) from Bothrocophias hyoprora (Amazonian hognose viper).